The primary structure comprises 106 residues: Met repressor (106 aa).

This sequence belongs to the MetJ family. In terms of assembly, homodimer.

The protein localises to the cytoplasm. This regulatory protein, when combined with SAM (S-adenosylmethionine) represses the expression of the methionine regulon and of enzymes involved in SAM synthesis. This Vibrio atlanticus (strain LGP32) (Vibrio splendidus (strain Mel32)) protein is Met repressor.